Consider the following 211-residue polypeptide: 2,3-bisphosphoglycerate-dependent phosphoglycerate mutase (211 aa).

Substrate is bound by residues 9–16 (RHGQSEWN), 22–23 (TG), arginine 61, 88–91 (ERDY), lysine 99, 115–116 (RR), and 159–160 (GN). Histidine 10 acts as the Tele-phosphohistidine intermediate in catalysis. The active-site Proton donor/acceptor is the glutamate 88.

The protein belongs to the phosphoglycerate mutase family. BPG-dependent PGAM subfamily. In terms of assembly, homodimer.

It catalyses the reaction (2R)-2-phosphoglycerate = (2R)-3-phosphoglycerate. It participates in carbohydrate degradation; glycolysis; pyruvate from D-glyceraldehyde 3-phosphate: step 3/5. Catalyzes the interconversion of 2-phosphoglycerate and 3-phosphoglycerate. The protein is 2,3-bisphosphoglycerate-dependent phosphoglycerate mutase of Sinorhizobium fredii (strain NBRC 101917 / NGR234).